The primary structure comprises 383 residues: Chaperone protein DnaJ (383 aa).

Residues 6-71 enclose the J domain; the sequence is DYYEVLGVSK…QKRSQYDQFG (66 aa). Residues 141–223 form a CR-type zinc finger; the sequence is GVEKKVKVKK…CKGEGVEIGE (83 aa). 8 residues coordinate Zn(2+): Cys-154, Cys-157, Cys-171, Cys-174, Cys-197, Cys-200, Cys-211, and Cys-214. CXXCXGXG motif repeat units lie at residues 154-161, 171-178, 197-204, and 211-218; these read CSKCRGDG, CQTCHGTG, CPTCHGEG, and CSKCKGEG.

It belongs to the DnaJ family. Homodimer. The cofactor is Zn(2+).

Its subcellular location is the cytoplasm. Participates actively in the response to hyperosmotic and heat shock by preventing the aggregation of stress-denatured proteins and by disaggregating proteins, also in an autonomous, DnaK-independent fashion. Unfolded proteins bind initially to DnaJ; upon interaction with the DnaJ-bound protein, DnaK hydrolyzes its bound ATP, resulting in the formation of a stable complex. GrpE releases ADP from DnaK; ATP binding to DnaK triggers the release of the substrate protein, thus completing the reaction cycle. Several rounds of ATP-dependent interactions between DnaJ, DnaK and GrpE are required for fully efficient folding. Also involved, together with DnaK and GrpE, in the DNA replication of plasmids through activation of initiation proteins. The chain is Chaperone protein DnaJ from Porphyromonas gingivalis (strain ATCC BAA-308 / W83).